The chain runs to 261 residues: Cytochrome c oxidase subunit 3 (261 aa).

At 1-15 (MAHQAHAYHMVDPSP) the chain is on the mitochondrial matrix side. A helical membrane pass occupies residues 16–34 (WPLTGAIAALLLTSGTAVW). Topologically, residues 35 to 40 (FHFHSL) are mitochondrial intermembrane. Residues 41 to 66 (TLLTLGNVLLLLTMYQWWRDIIREGT) traverse the membrane as a helical segment. The Mitochondrial matrix portion of the chain corresponds to 67 to 72 (FQGHHT). A helical transmembrane segment spans residues 73 to 105 (PPVQKGLRYGMILFITSEVFFFLGFFWAFYHAS). At 106–128 (LAPTPELGGCWPPTGITTLDPFE) the chain is on the mitochondrial intermembrane side. A helical transmembrane segment spans residues 129–152 (VPLLNTAVLLASGVTVTWAHHSIM). The Mitochondrial matrix portion of the chain corresponds to 153–155 (EGE). A helical membrane pass occupies residues 156-183 (RKQTIQALTLTILLGFYFTFLQGMEYYE). The Mitochondrial intermembrane portion of the chain corresponds to 184–190 (APFTIAD). A helical membrane pass occupies residues 191–223 (GVYGSTFFVATGFHGLHVIIGSTFLAVCLLRQV). At 224–232 (QYHFTSEHH) the chain is on the mitochondrial matrix side. The chain crosses the membrane as a helical span at residues 233-256 (FGFEAAAWYWHFVDVVWLFLYVSI). Residues 257-261 (YWWGS) are Mitochondrial intermembrane-facing.

Belongs to the cytochrome c oxidase subunit 3 family. In terms of assembly, component of the cytochrome c oxidase (complex IV, CIV), a multisubunit enzyme composed of 14 subunits. The complex is composed of a catalytic core of 3 subunits MT-CO1, MT-CO2 and MT-CO3, encoded in the mitochondrial DNA, and 11 supernumerary subunits COX4I, COX5A, COX5B, COX6A, COX6B, COX6C, COX7A, COX7B, COX7C, COX8 and NDUFA4, which are encoded in the nuclear genome. The complex exists as a monomer or a dimer and forms supercomplexes (SCs) in the inner mitochondrial membrane with NADH-ubiquinone oxidoreductase (complex I, CI) and ubiquinol-cytochrome c oxidoreductase (cytochrome b-c1 complex, complex III, CIII), resulting in different assemblies (supercomplex SCI(1)III(2)IV(1) and megacomplex MCI(2)III(2)IV(2)).

Its subcellular location is the mitochondrion inner membrane. It carries out the reaction 4 Fe(II)-[cytochrome c] + O2 + 8 H(+)(in) = 4 Fe(III)-[cytochrome c] + 2 H2O + 4 H(+)(out). Component of the cytochrome c oxidase, the last enzyme in the mitochondrial electron transport chain which drives oxidative phosphorylation. The respiratory chain contains 3 multisubunit complexes succinate dehydrogenase (complex II, CII), ubiquinol-cytochrome c oxidoreductase (cytochrome b-c1 complex, complex III, CIII) and cytochrome c oxidase (complex IV, CIV), that cooperate to transfer electrons derived from NADH and succinate to molecular oxygen, creating an electrochemical gradient over the inner membrane that drives transmembrane transport and the ATP synthase. Cytochrome c oxidase is the component of the respiratory chain that catalyzes the reduction of oxygen to water. Electrons originating from reduced cytochrome c in the intermembrane space (IMS) are transferred via the dinuclear copper A center (CU(A)) of subunit 2 and heme A of subunit 1 to the active site in subunit 1, a binuclear center (BNC) formed by heme A3 and copper B (CU(B)). The BNC reduces molecular oxygen to 2 water molecules using 4 electrons from cytochrome c in the IMS and 4 protons from the mitochondrial matrix. This Oncorhynchus masou (Cherry salmon) protein is Cytochrome c oxidase subunit 3 (mt-co3).